We begin with the raw amino-acid sequence, 101 residues long: HssA/B-like protein 40 (101 aa).

The interval 1–26 (MTLFSSISSMSTSMSGSKSSISSFGS) is disordered.

This sequence belongs to the hssA/B family.

In Dictyostelium discoideum (Social amoeba), this protein is HssA/B-like protein 40 (hssl40).